The sequence spans 706 residues: Probable rhamnogalacturonate lyase B (706 aa).

The N-terminal stretch at 1 to 19 (MRLLHPLIPASLLLTLTSA) is a signal peptide. Residues N27, N40, N143, N239, N285, N380, N495, N569, N597, and N638 are each glycosylated (N-linked (GlcNAc...) asparagine).

This sequence belongs to the polysaccharide lyase 4 family.

It is found in the secreted. The enzyme catalyses Endotype eliminative cleavage of L-alpha-rhamnopyranosyl-(1-&gt;4)-alpha-D-galactopyranosyluronic acid bonds of rhamnogalacturonan I domains in ramified hairy regions of pectin leaving L-rhamnopyranose at the reducing end and 4-deoxy-4,5-unsaturated D-galactopyranosyluronic acid at the non-reducing end.. In terms of biological role, pectinolytic enzymes consist of four classes of enzymes: pectin lyase, polygalacturonase, pectin methylesterase and rhamnogalacturonase. Degrades the rhamnogalacturonan I (RG-I) backbone of pectin. The polypeptide is Probable rhamnogalacturonate lyase B (rglB) (Aspergillus niger (strain ATCC MYA-4892 / CBS 513.88 / FGSC A1513)).